Consider the following 181-residue polypeptide: High mobility group protein B4 (181 aa).

The HMG box 1 DNA-binding region spans 9–79 (PKVNVSSYIH…RYQQEMMNYI (71 aa)). Residues 80–89 (GKRRKRRKRD) are compositionally biased toward basic residues. The disordered stretch occupies residues 80-100 (GKRRKRRKRDPKAPRKPPSSF). A DNA-binding region (HMG box 2) is located at residues 93–161 (PRKPPSSFLL…KYFEEQEAYR (69 aa)).

This sequence belongs to the HMGB family. As to expression, expressed in adult germ cells (at protein level).

The protein localises to the nucleus. Its subcellular location is the chromosome. This Mus musculus (Mouse) protein is High mobility group protein B4 (Hmgb4).